A 616-amino-acid polypeptide reads, in one-letter code: Ectonucleoside triphosphate diphosphohydrolase 4 (616 aa).

At 1 to 33 (MGRIGISCLFPASWHFSISPVGCPRILNTNLRQ) the chain is on the cytoplasmic side. The chain crosses the membrane as a helical span at residues 34 to 54 (IMVISVLAAAVSLLYFSVVII). The Lumenal segment spans residues 55–559 (RNKYGRLTRD…ASHTHWRGVS (505 aa)). Catalysis depends on E222, which acts as the Proton acceptor. A disulfide bridge links C368 with C395. Residues N404 and N407 are each glycosylated (N-linked (GlcNAc...) asparagine). The cysteines at positions 461 and 490 are disulfide-linked. Residues 560–580 (FVYNHYLFSGCFLVVLLAILL) traverse the membrane as a helical segment. At 581 to 616 (YLLRLRRIHRRTPRSSSAAALWMEEGLPAQNAPGTL) the chain is on the cytoplasmic side.

The protein belongs to the GDA1/CD39 NTPase family. It depends on Ca(2+) as a cofactor. Mg(2+) serves as cofactor. As to expression, ubiquitous. Highest expression in testis and lowest in bladder.

Its subcellular location is the cytoplasmic vesicle. The protein localises to the autophagosome membrane. It is found in the lysosome membrane. The protein resides in the golgi apparatus membrane. It catalyses the reaction a ribonucleoside 5'-diphosphate + H2O = a ribonucleoside 5'-phosphate + phosphate + H(+). It carries out the reaction a ribonucleoside 5'-triphosphate + H2O = a ribonucleoside 5'-diphosphate + phosphate + H(+). The catalysed reaction is UDP + H2O = UMP + phosphate + H(+). The enzyme catalyses UTP + H2O = UDP + phosphate + H(+). It catalyses the reaction CTP + H2O = CDP + phosphate + H(+). It carries out the reaction GDP + H2O = GMP + phosphate + H(+). The catalysed reaction is GTP + H2O = GDP + phosphate + H(+). The enzyme catalyses 5-methyl-UTP + H2O = 5-methyl-UDP + phosphate + H(+). In terms of biological role, catalyzes the hydrolysis of nucleoside triphosphates and diphosphates in a calcium- or magnesium-dependent manner, with a preference for pyrimidines. Preferentially hydrolyzes UTP and TTP. AMP, ADP, ATP and UMP are not substrates. Preferentially activated by Ca(2+) over Mg(2+). Its function is as follows. Has a broad substrate specificity with the ability of cleaving all nucleotide di- and triphosphates with the exception of adenosine di- and triphosphate (ADP and ATP). Preferentially hydrolyzes CTP, UDP, CDP, GTP and GDP. Can use either Ca(2+) or Mg(2+) equally. This chain is Ectonucleoside triphosphate diphosphohydrolase 4, found in Homo sapiens (Human).